Consider the following 485-residue polypeptide: Elongation factor TuB, chloroplastic (485 aa).

A chloroplast-targeting transit peptide spans 1–76 (MASISAASAT…TTHPRRFTVR (76 aa)). Residues 86 to 290 (KPHVNIGTIG…NVDEYIPIPQ (205 aa)) enclose the tr-type G domain. The segment at 95–102 (GHVDHGKT) is G1. Position 95–102 (95–102 (GHVDHGKT)) interacts with GTP. Residues 136–140 (GITIN) form a G2 region. Residues 157 to 160 (DCPG) are G3. GTP-binding positions include 157–161 (DCPGH) and 212–215 (NKQD). Residues 212-215 (NKQD) are G4. The G5 stretch occupies residues 250–252 (SAL).

Belongs to the TRAFAC class translation factor GTPase superfamily. Classic translation factor GTPase family. EF-Tu/EF-1A subfamily.

The protein localises to the plastid. It is found in the chloroplast. Functionally, this protein promotes the GTP-dependent binding of aminoacyl-tRNA to the A-site of ribosomes during protein biosynthesis. This Nicotiana sylvestris (Wood tobacco) protein is Elongation factor TuB, chloroplastic (TUFB).